Here is a 132-residue protein sequence, read N- to C-terminus: Galectin-2 (132 aa).

The 128-residue stretch at 4–131 folds into the Galectin domain; it reads ELEVKNMDMK…GFNMSSFKLK (128 aa). 65 to 71 is a binding site for a beta-D-galactoside; the sequence is WGQEQRE.

As to quaternary structure, homodimer.

Functionally, this protein binds beta-galactoside. Its physiological function is not yet known. In Homo sapiens (Human), this protein is Galectin-2 (LGALS2).